The chain runs to 342 residues: tRNA dimethylallyltransferase (342 aa).

39 to 46 (GPTGSGKT) is an ATP binding site. 41 to 46 (TGSGKT) lines the substrate pocket. Residues 64–67 (DSMQ) are interaction with substrate tRNA.

The protein belongs to the IPP transferase family. Monomer. It depends on Mg(2+) as a cofactor.

It catalyses the reaction adenosine(37) in tRNA + dimethylallyl diphosphate = N(6)-dimethylallyladenosine(37) in tRNA + diphosphate. Functionally, catalyzes the transfer of a dimethylallyl group onto the adenine at position 37 in tRNAs that read codons beginning with uridine, leading to the formation of N6-(dimethylallyl)adenosine (i(6)A). The protein is tRNA dimethylallyltransferase of Chlamydia abortus (strain DSM 27085 / S26/3) (Chlamydophila abortus).